A 136-amino-acid chain; its full sequence is Galectin-7 (136 aa).

One can recognise a Galectin domain in the interval 6–136 (HKTSLPQGVR…DVQLHSLNIF (131 aa)). Residue 70–76 (WGREERG) participates in a beta-D-galactoside binding.

Monomer.

The protein localises to the cytoplasm. The protein resides in the nucleus. Its subcellular location is the secreted. Could be involved in cell-cell and/or cell-matrix interactions necessary for normal growth control. Pro-apoptotic protein that functions intracellularly upstream of JNK activation and cytochrome c release. This Mus musculus (Mouse) protein is Galectin-7 (Lgals7).